We begin with the raw amino-acid sequence, 463 residues long: Phosphoglucosamine mutase (463 aa).

The active-site Phosphoserine intermediate is the Ser-102. Mg(2+) is bound by residues Ser-102, Asp-240, Asp-242, and Asp-244. Residue Ser-102 is modified to Phosphoserine.

This sequence belongs to the phosphohexose mutase family. Requires Mg(2+) as cofactor. Activated by phosphorylation.

The catalysed reaction is alpha-D-glucosamine 1-phosphate = D-glucosamine 6-phosphate. In terms of biological role, catalyzes the conversion of glucosamine-6-phosphate to glucosamine-1-phosphate. This is Phosphoglucosamine mutase from Mycobacterium leprae (strain Br4923).